The sequence spans 303 residues: L(+)-tartrate dehydratase subunit alpha (303 aa).

Residues Cys-71, Cys-190, and Cys-277 each coordinate iron-sulfur cluster.

It belongs to the class-I fumarase family. Tetramer of two alpha and two beta subunits. Iron-sulfur cluster serves as cofactor.

The enzyme catalyses (2R,3R)-tartrate = oxaloacetate + H2O. In Escherichia coli O6:H1 (strain CFT073 / ATCC 700928 / UPEC), this protein is L(+)-tartrate dehydratase subunit alpha (ttdA).